The chain runs to 229 residues: Putative N-acetylmannosamine-6-phosphate 2-epimerase (229 aa).

It belongs to the NanE family.

It catalyses the reaction an N-acyl-D-glucosamine 6-phosphate = an N-acyl-D-mannosamine 6-phosphate. It functions in the pathway amino-sugar metabolism; N-acetylneuraminate degradation; D-fructose 6-phosphate from N-acetylneuraminate: step 3/5. Functionally, converts N-acetylmannosamine-6-phosphate (ManNAc-6-P) to N-acetylglucosamine-6-phosphate (GlcNAc-6-P). This is Putative N-acetylmannosamine-6-phosphate 2-epimerase from Escherichia fergusonii (strain ATCC 35469 / DSM 13698 / CCUG 18766 / IAM 14443 / JCM 21226 / LMG 7866 / NBRC 102419 / NCTC 12128 / CDC 0568-73).